The chain runs to 513 residues: Dye-decolorizing peroxidase msp1 (513 aa).

Residues 1–20 (MKLFSASVFAAIIASHYASA) form the signal peptide. Positions 21–55 (TAHIRAPNVKPRRTNSLLTAPPQQPPLPSAQQAAS) are excised as a propeptide. A disordered region spans residues 33–52 (RTNSLLTAPPQQPPLPSAQQ). The Proton acceptor role is filled by Asp228. His365 lines the heme pocket.

Homodimer. Heme b is required as a cofactor.

It localises to the secreted. The enzyme catalyses Reactive Blue 5 + 2 H2O2 = 2,2'-disulfonyl azobenzene + 3-[(4-amino-6-chloro-1,3,5-triazin-2-yl)amino]benzenesulfonate + phthalate + 2 H2O + 2 H(+). The catalysed reaction is 2 a phenolic donor + H2O2 = 2 a phenolic radical donor + 2 H2O. Its function is as follows. Manganese-independent peroxidase that is able to convert a large number of compounds, but its physiological substrate is not known. In addition to classic peroxidase substrates (e.g. 2,6-dimethoxyphenol), oxidizes dyes such as Reactive Blue 5. Also degrades beta-carotene. The polypeptide is Dye-decolorizing peroxidase msp1 (Mycetinis scorodonius (Garlic mushroom)).